Consider the following 1390-residue polypeptide: DNA-directed RNA polymerase subunit beta'' (1390 aa).

Zn(2+)-binding residues include Cys224, Cys294, Cys301, and Cys304.

It belongs to the RNA polymerase beta' chain family. RpoC2 subfamily. In terms of assembly, in plastids the minimal PEP RNA polymerase catalytic core is composed of four subunits: alpha, beta, beta', and beta''. When a (nuclear-encoded) sigma factor is associated with the core the holoenzyme is formed, which can initiate transcription. The cofactor is Zn(2+).

It localises to the plastid. Its subcellular location is the chloroplast. It catalyses the reaction RNA(n) + a ribonucleoside 5'-triphosphate = RNA(n+1) + diphosphate. DNA-dependent RNA polymerase catalyzes the transcription of DNA into RNA using the four ribonucleoside triphosphates as substrates. The protein is DNA-directed RNA polymerase subunit beta'' of Ceratophyllum demersum (Rigid hornwort).